We begin with the raw amino-acid sequence, 562 residues long: Transmembrane E3 ubiquitin-protein ligase FLY1 (562 aa).

A signal peptide spans 1–32 (MKKREHLGLGFFEWQIILWLSIWLAISQQALG). Residues 33–262 (LRPIREKPRS…TSVNVEVYYN (230 aa)) lie on the Lumenal side of the membrane. Residues 263-283 (KAVNYTLMVTFVSFLQVLLLI) traverse the membrane as a helical segment. Residues 284–297 (RQMEHGNTQSGAAK) lie on the Cytoplasmic side of the membrane. A helical transmembrane segment spans residues 298-318 (VSIVMIGQQAIMDAYLCLLHL). Over 319–321 (TAG) the chain is Lumenal. Residues 322 to 342 (ILVESLFNAFATAAFFKFVVF) traverse the membrane as a helical segment. The Cytoplasmic portion of the chain corresponds to 343–373 (SIFEMRYLLAIWKATRPSNSGEGWETMRREL). Residues 374–394 (SFLYSRFYGILLGGILIMYQF) traverse the membrane as a helical segment. Topologically, residues 395–397 (HNY) are lumenal. The chain crosses the membrane as a helical span at residues 398-418 (MQPILLLMYSFWIPQIVANVV). Over 419–426 (RDSRKPLH) the chain is Cytoplasmic. Residues 427–447 (PYYILGMTATRLAIPLYVFGC) form a helical membrane-spanning segment. At 448–458 (PHNFMRVEPNK) the chain is on the lumenal side. Residues 459 to 479 (VWCICLCTFMGLQAVILLLQH) form a helical membrane-spanning segment. Residues 480–562 (YFGSRCFVPR…PTCRRSLPPA (83 aa)) are Cytoplasmic-facing. The segment at 512 to 556 (CVICMTAIDLRQHTSDCMVTPCEHFFHSGCLQRWMDIKMECPTCR) adopts an RING-type; atypical zinc-finger fold.

As to expression, highly expressed in stems. Expressed in root xylem and seed coat.

It localises to the endomembrane system. It catalyses the reaction S-ubiquitinyl-[E2 ubiquitin-conjugating enzyme]-L-cysteine + [acceptor protein]-L-lysine = [E2 ubiquitin-conjugating enzyme]-L-cysteine + N(6)-ubiquitinyl-[acceptor protein]-L-lysine.. It functions in the pathway protein modification; protein ubiquitination. In terms of biological role, E3 ubiquitin-protein ligase that regulates the degree of methylesterification of pectin in seed mucilage. May be involved in the recycling of pectin methylesterase enzymes in the endomembrane system of seed coat epidermal cells. Possesses E3 ubiquitin-protein ligase activity in vitro when associated with the E1 enzyme UBA1 and the E2 enzyme UBC8. May be involved in xylem development. The polypeptide is Transmembrane E3 ubiquitin-protein ligase FLY1 (Arabidopsis thaliana (Mouse-ear cress)).